We begin with the raw amino-acid sequence, 68 residues long: Large ribosomal subunit protein bL35 (68 aa).

Belongs to the bacterial ribosomal protein bL35 family.

This is Large ribosomal subunit protein bL35 from Rickettsia bellii (strain RML369-C).